Here is a 393-residue protein sequence, read N- to C-terminus: Small RNA 2'-O-methyltransferase (393 aa).

Residues Tyr36, Gly55, Asp78, Lys83, Val115, and Ile131 each contribute to the S-adenosyl-L-methionine site. Residues Glu132, Glu135, His136, and His181 each coordinate Mg(2+). The segment at 286–307 is disordered; that stretch reads HLPRRKEQAGERGDKPKDIGGS. Basic and acidic residues predominate over residues 290 to 305; the sequence is RKEQAGERGDKPKDIG.

It belongs to the methyltransferase superfamily. HEN1 family. Requires Mg(2+) as cofactor.

The protein localises to the cytoplasm. It carries out the reaction small RNA 3'-end nucleotide + S-adenosyl-L-methionine = small RNA 3'-end 2'-O-methylnucleotide + S-adenosyl-L-homocysteine + H(+). Its function is as follows. Methyltransferase that adds a 2'-O-methyl group at the 3'-end of piRNAs, a class of 24 to 30 nucleotide RNAs that are generated by a Dicer-independent mechanism and are primarily derived from transposons and other repeated sequence elements. This probably protects the 3'-end of piRNAs from uridylation activity and subsequent degradation. Stabilization of piRNAs is essential for gametogenesis. In Homo sapiens (Human), this protein is Small RNA 2'-O-methyltransferase (HENMT1).